Here is a 383-residue protein sequence, read N- to C-terminus: Lipid-A-disaccharide synthase (383 aa).

It belongs to the LpxB family.

It catalyses the reaction a lipid X + a UDP-2-N,3-O-bis[(3R)-3-hydroxyacyl]-alpha-D-glucosamine = a lipid A disaccharide + UDP + H(+). It participates in bacterial outer membrane biogenesis; LPS lipid A biosynthesis. In terms of biological role, condensation of UDP-2,3-diacylglucosamine and 2,3-diacylglucosamine-1-phosphate to form lipid A disaccharide, a precursor of lipid A, a phosphorylated glycolipid that anchors the lipopolysaccharide to the outer membrane of the cell. The sequence is that of Lipid-A-disaccharide synthase from Anaeromyxobacter dehalogenans (strain 2CP-C).